We begin with the raw amino-acid sequence, 313 residues long: Porphobilinogen deaminase (313 aa).

C242 bears the S-(dipyrrolylmethanemethyl)cysteine mark.

Belongs to the HMBS family. Monomer. Dipyrromethane serves as cofactor.

The catalysed reaction is 4 porphobilinogen + H2O = hydroxymethylbilane + 4 NH4(+). Its pathway is porphyrin-containing compound metabolism; protoporphyrin-IX biosynthesis; coproporphyrinogen-III from 5-aminolevulinate: step 2/4. Its function is as follows. Tetrapolymerization of the monopyrrole PBG into the hydroxymethylbilane pre-uroporphyrinogen in several discrete steps. The polypeptide is Porphobilinogen deaminase (Pseudomonas putida (strain W619)).